Here is a 546-residue protein sequence, read N- to C-terminus: ATP synthase subunit alpha (546 aa).

172 to 179 (GDRKTGKT) provides a ligand contact to ATP.

Belongs to the ATPase alpha/beta chains family. As to quaternary structure, F-type ATPases have 2 components, CF(1) - the catalytic core - and CF(0) - the membrane proton channel. CF(1) has five subunits: alpha(3), beta(3), gamma(1), delta(1), epsilon(1). CF(0) has three main subunits: a(1), b(2) and c(9-12). The alpha and beta chains form an alternating ring which encloses part of the gamma chain. CF(1) is attached to CF(0) by a central stalk formed by the gamma and epsilon chains, while a peripheral stalk is formed by the delta and b chains.

It is found in the cell membrane. It carries out the reaction ATP + H2O + 4 H(+)(in) = ADP + phosphate + 5 H(+)(out). Its function is as follows. Produces ATP from ADP in the presence of a proton gradient across the membrane. The alpha chain is a regulatory subunit. The protein is ATP synthase subunit alpha of Corynebacterium efficiens (strain DSM 44549 / YS-314 / AJ 12310 / JCM 11189 / NBRC 100395).